Reading from the N-terminus, the 122-residue chain is Large ribosomal subunit protein uL18 (122 aa).

It belongs to the universal ribosomal protein uL18 family. Part of the 50S ribosomal subunit; part of the 5S rRNA/L5/L18/L25 subcomplex. Contacts the 5S and 23S rRNAs.

In terms of biological role, this is one of the proteins that bind and probably mediate the attachment of the 5S RNA into the large ribosomal subunit, where it forms part of the central protuberance. This Leptospira biflexa serovar Patoc (strain Patoc 1 / Ames) protein is Large ribosomal subunit protein uL18.